Reading from the N-terminus, the 158-residue chain is Large ribosomal subunit protein uL13 (158 aa).

The protein belongs to the universal ribosomal protein uL13 family. In terms of assembly, part of the 50S ribosomal subunit.

This protein is one of the early assembly proteins of the 50S ribosomal subunit, although it is not seen to bind rRNA by itself. It is important during the early stages of 50S assembly. The protein is Large ribosomal subunit protein uL13 of Rickettsia canadensis (strain McKiel).